Consider the following 543-residue polypeptide: Nucleoside-triphosphatase ntp-1 (543 aa).

A helical transmembrane segment spans residues 40–60; that stretch reads VYGFLLTCTCLLLILTIIPMS. Catalysis depends on E212, which acts as the Proton acceptor. The chain crosses the membrane as a helical span at residues 497 to 517; it reads QISNFFSFFVILIIVLAVALY.

The protein belongs to the GDA1/CD39 NTPase family.

The protein localises to the golgi apparatus membrane. It catalyses the reaction a ribonucleoside 5'-triphosphate + H2O = a ribonucleoside 5'-diphosphate + phosphate + H(+). Seems to be able to hydrolyze CTP, ATP and UTP. The sequence is that of Nucleoside-triphosphatase ntp-1 from Caenorhabditis elegans.